The chain runs to 352 residues: Ion-translocating oxidoreductase complex subunit D (352 aa).

The next 4 membrane-spanning stretches (helical) occupy residues 20–40, 42–62, 69–91, and 123–143; these read IMLL…WFFG, GTLF…AIVL, VASH…SIPP, and PAMI…TSWL. FMN phosphoryl threonine is present on Thr187. Transmembrane regions (helical) follow at residues 215–235, 242–262, 267–287, 301–321, and 322–342; these read LAGV…VFLL, WHIP…GWLF, LASP…FFIL, LIFG…GGYP, and DGVA…DYYT.

The protein belongs to the NqrB/RnfD family. As to quaternary structure, the complex is composed of six subunits: RsxA, RsxB, RsxC, RsxD, RsxE and RsxG. It depends on FMN as a cofactor.

The protein localises to the cell inner membrane. In terms of biological role, part of a membrane-bound complex that couples electron transfer with translocation of ions across the membrane. Required to maintain the reduced state of SoxR. The sequence is that of Ion-translocating oxidoreductase complex subunit D from Salmonella enteritidis PT4 (strain P125109).